The sequence spans 229 residues: Cytochrome c oxidase subunit 2 (229 aa).

Over 1-26 (MSTWANLGLQDSASPLMEQLIFFHDH) the chain is Mitochondrial intermembrane. The helical transmembrane segment at 27-48 (ALLILVMITVLVGYLMFMLFFN) threads the bilayer. The Mitochondrial matrix portion of the chain corresponds to 49–62 (SYVNRFLLHGQLIE). The helical transmembrane segment at 63-82 (MIWTILPAIILLFIAMPSLR) threads the bilayer. The Mitochondrial intermembrane segment spans residues 83-229 (LLYLLDEINE…IKWISNSVNS (147 aa)). Cu cation contacts are provided by His-161, Cys-196, Glu-198, Cys-200, His-204, and Met-207. Glu-198 contributes to the Mg(2+) binding site.

This sequence belongs to the cytochrome c oxidase subunit 2 family. Component of the cytochrome c oxidase (complex IV, CIV), a multisubunit enzyme composed of a catalytic core of 3 subunits and several supernumerary subunits. The complex exists as a monomer or a dimer and forms supercomplexes (SCs) in the inner mitochondrial membrane with ubiquinol-cytochrome c oxidoreductase (cytochrome b-c1 complex, complex III, CIII). Cu cation serves as cofactor.

It is found in the mitochondrion inner membrane. It carries out the reaction 4 Fe(II)-[cytochrome c] + O2 + 8 H(+)(in) = 4 Fe(III)-[cytochrome c] + 2 H2O + 4 H(+)(out). Component of the cytochrome c oxidase, the last enzyme in the mitochondrial electron transport chain which drives oxidative phosphorylation. The respiratory chain contains 3 multisubunit complexes succinate dehydrogenase (complex II, CII), ubiquinol-cytochrome c oxidoreductase (cytochrome b-c1 complex, complex III, CIII) and cytochrome c oxidase (complex IV, CIV), that cooperate to transfer electrons derived from NADH and succinate to molecular oxygen, creating an electrochemical gradient over the inner membrane that drives transmembrane transport and the ATP synthase. Cytochrome c oxidase is the component of the respiratory chain that catalyzes the reduction of oxygen to water. Electrons originating from reduced cytochrome c in the intermembrane space (IMS) are transferred via the dinuclear copper A center (CU(A)) of subunit 2 and heme A of subunit 1 to the active site in subunit 1, a binuclear center (BNC) formed by heme A3 and copper B (CU(B)). The BNC reduces molecular oxygen to 2 water molecules using 4 electrons from cytochrome c in the IMS and 4 protons from the mitochondrial matrix. In Drosophila narragansett (Fruit fly), this protein is Cytochrome c oxidase subunit 2 (mt:CoII).